The following is a 79-amino-acid chain: Dolichyl-diphosphooligosaccharide--protein glycosyltransferase subunit TMEM258 (79 aa).

The next 2 helical transmembrane spans lie at 17–37 (VFPH…AWFF) and 59–79 (VASL…GIFV).

Belongs to the OST5 family. Component of the oligosaccharyltransferase (OST) complex.

It is found in the membrane. Its subcellular location is the endoplasmic reticulum. The protein localises to the cytoplasm. The protein operates within protein modification; protein glycosylation. Its function is as follows. Subunit of the oligosaccharyl transferase (OST) complex that catalyzes the initial transfer of a defined glycan (Glc(3)Man(9)GlcNAc(2) in eukaryotes) from the lipid carrier dolichol-pyrophosphate to an asparagine residue within an Asn-X-Ser/Thr consensus motif in nascent polypeptide chains, the first step in protein N-glycosylation. N-glycosylation occurs cotranslationally and the complex associates with the Sec61 complex at the channel-forming translocon complex that mediates protein translocation across the endoplasmic reticulum (ER). All subunits are required for a maximal enzyme activity. This Danio rerio (Zebrafish) protein is Dolichyl-diphosphooligosaccharide--protein glycosyltransferase subunit TMEM258.